The primary structure comprises 380 residues: tRNA(Met) cytidine acetate ligase (380 aa).

Residues 7–20 (IAEYNPFHNGHLYQ), Gly-101, Asn-151, and Arg-176 contribute to the ATP site.

Belongs to the TmcAL family.

It is found in the cytoplasm. The enzyme catalyses cytidine(34) in elongator tRNA(Met) + acetate + ATP = N(4)-acetylcytidine(34) in elongator tRNA(Met) + AMP + diphosphate. Catalyzes the formation of N(4)-acetylcytidine (ac(4)C) at the wobble position of elongator tRNA(Met), using acetate and ATP as substrates. First activates an acetate ion to form acetyladenylate (Ac-AMP) and then transfers the acetyl group to tRNA to form ac(4)C34. This chain is tRNA(Met) cytidine acetate ligase, found in Ligilactobacillus salivarius (strain UCC118) (Lactobacillus salivarius).